The following is an 899-amino-acid chain: Protein translocase subunit SecA (899 aa).

ATP contacts are provided by residues glutamine 87, glycine 105 to threonine 109, and aspartate 516. Residues cysteine 884, cysteine 886, cysteine 895, and histidine 896 each contribute to the Zn(2+) site.

This sequence belongs to the SecA family. Monomer and homodimer. Part of the essential Sec protein translocation apparatus which comprises SecA, SecYEG and auxiliary proteins SecDF. Other proteins may also be involved. Zn(2+) serves as cofactor.

It localises to the cell inner membrane. The protein resides in the cytoplasm. It carries out the reaction ATP + H2O + cellular proteinSide 1 = ADP + phosphate + cellular proteinSide 2.. Part of the Sec protein translocase complex. Interacts with the SecYEG preprotein conducting channel. Has a central role in coupling the hydrolysis of ATP to the transfer of proteins into and across the cell membrane, serving as an ATP-driven molecular motor driving the stepwise translocation of polypeptide chains across the membrane. The chain is Protein translocase subunit SecA from Borreliella afzelii (strain PKo) (Borrelia afzelii).